Reading from the N-terminus, the 330-residue chain is DNA-directed RNA polymerase subunit alpha (330 aa).

An alpha N-terminal domain (alpha-NTD) region spans residues 1–231; that stretch reads MQTNLLKPKA…EQLAVFAQLE (231 aa). Positions 250–330 are alpha C-terminal domain (alpha-CTD); sequence FDPILLRPVD…NWPPAGLDKR (81 aa).

It belongs to the RNA polymerase alpha chain family. In terms of assembly, homodimer. The RNAP catalytic core consists of 2 alpha, 1 beta, 1 beta' and 1 omega subunit. When a sigma factor is associated with the core the holoenzyme is formed, which can initiate transcription.

The enzyme catalyses RNA(n) + a ribonucleoside 5'-triphosphate = RNA(n+1) + diphosphate. In terms of biological role, DNA-dependent RNA polymerase catalyzes the transcription of DNA into RNA using the four ribonucleoside triphosphates as substrates. The protein is DNA-directed RNA polymerase subunit alpha of Acidovorax ebreus (strain TPSY) (Diaphorobacter sp. (strain TPSY)).